The primary structure comprises 191 residues: dCTP deaminase (191 aa).

Residues 112-117 (KSTYAR), 136-138 (TLE), Q157, Y173, and Q183 each bind dCTP. The active-site Proton donor/acceptor is the E138.

It belongs to the dCTP deaminase family. Homotrimer.

The catalysed reaction is dCTP + H2O + H(+) = dUTP + NH4(+). It functions in the pathway pyrimidine metabolism; dUMP biosynthesis; dUMP from dCTP (dUTP route): step 1/2. Its function is as follows. Catalyzes the deamination of dCTP to dUTP. This is dCTP deaminase from Xylella fastidiosa (strain M12).